The following is a 309-amino-acid chain: Ribonuclease Z (309 aa).

Residues His63, His65, Asp67, His68, His145, Asp216, and His274 each contribute to the Zn(2+) site. Asp67 serves as the catalytic Proton acceptor.

This sequence belongs to the RNase Z family. In terms of assembly, homodimer. Requires Zn(2+) as cofactor.

The enzyme catalyses Endonucleolytic cleavage of RNA, removing extra 3' nucleotides from tRNA precursor, generating 3' termini of tRNAs. A 3'-hydroxy group is left at the tRNA terminus and a 5'-phosphoryl group is left at the trailer molecule.. Its function is as follows. Zinc phosphodiesterase, which displays some tRNA 3'-processing endonuclease activity. Probably involved in tRNA maturation, by removing a 3'-trailer from precursor tRNA. This chain is Ribonuclease Z, found in Streptococcus thermophilus (strain CNRZ 1066).